The sequence spans 764 residues: 5-methyltetrahydropteroyltriglutamate--homocysteine methyltransferase (764 aa).

5-methyltetrahydropteroyltri-L-glutamate contacts are provided by residues Arg16 to Lys19 and Lys115. L-homocysteine-binding positions include Ile435–Ser437 and Glu488. L-methionine is bound by residues Ile435–Ser437 and Glu488. Residues Arg519–Cys520 and Trp565 contribute to the 5-methyltetrahydropteroyltri-L-glutamate site. L-homocysteine is bound at residue Asp603. Asp603 contributes to the L-methionine binding site. Glu609 contributes to the 5-methyltetrahydropteroyltri-L-glutamate binding site. His645, Cys647, and Glu669 together coordinate Zn(2+). His698 serves as the catalytic Proton donor. Zn(2+) is bound at residue Cys730.

This sequence belongs to the vitamin-B12 independent methionine synthase family. It depends on Zn(2+) as a cofactor.

The catalysed reaction is 5-methyltetrahydropteroyltri-L-glutamate + L-homocysteine = tetrahydropteroyltri-L-glutamate + L-methionine. It functions in the pathway amino-acid biosynthesis; L-methionine biosynthesis via de novo pathway; L-methionine from L-homocysteine (MetE route): step 1/1. Its function is as follows. Catalyzes the transfer of a methyl group from 5-methyltetrahydrofolate to homocysteine resulting in methionine formation. This is 5-methyltetrahydropteroyltriglutamate--homocysteine methyltransferase from Burkholderia pseudomallei (strain 668).